The primary structure comprises 1502 residues: Rho GTPase-activating protein 5 (1502 aa).

FF domains lie at 267–325 (QLVV…HIEQ), 366–420 (KLME…HVQH), 427–481 (RVEM…HQRE), and 482–548 (IVEK…HIGF). 3'-nitrotyrosine is present on Tyr550. Phosphoserine occurs at positions 590 and 765. In terms of domain architecture, pG1 pseudoGTPase spans 590–763 (STNIDKVNLF…LESVKHNLDV (174 aa)). The 166-residue stretch at 779-944 (RIVMCAMCGD…FSDVLEKKNM (166 aa)) folds into the pG2 pseudoGTPase domain. Residues Ser951 and Ser968 each carry the phosphoserine modification. Disordered stretches follow at residues 975 to 1004 (YNNY…LPTP), 1022 to 1050 (HSTP…PKTN), and 1069 to 1089 (NPRK…DPSD). The span at 1036 to 1045 (VPPPIKPKPV) shows a compositional bias: pro residues. Ser1115 carries the phosphoserine modification. 2 disordered regions span residues 1125-1156 (FVNN…YKYK) and 1168-1254 (YRRT…TRRN). Basic and acidic residues predominate over residues 1140 to 1150 (RTSKSHGERRP). 5 positions are modified to phosphoserine: Ser1173, Ser1176, Ser1195, Ser1202, and Ser1218. The Rho-GAP domain occupies 1262 to 1449 (MPLQDLVTAE…TFIQQCQFFF (188 aa)).

As to quaternary structure, may interact with RASA1/p120GAP. As to expression, detected in skin fibroblasts (at protein level).

It is found in the cytoplasm. Its subcellular location is the cell membrane. In terms of biological role, GTPase-activating protein for Rho family members. The protein is Rho GTPase-activating protein 5 (ARHGAP5) of Homo sapiens (Human).